Reading from the N-terminus, the 162-residue chain is Probable metalloprotease y4jG (162 aa).

Residues 9–147 (TVALPRDCVS…YRLDAKANWN (139 aa)) form the MPN domain. Zn(2+)-binding residues include H94, H96, and D107.

The protein belongs to the peptidase M67B family.

This is Probable metalloprotease y4jG from Sinorhizobium fredii (strain NBRC 101917 / NGR234).